A 227-amino-acid chain; its full sequence is E3 ubiquitin-protein ligase RNF186 (227 aa).

An RING-type zinc finger spans residues 40-86 (CLVCREPYSCPRLPKLLACQHAFCAICLKLLLCVQDNTWSITCPLCR). 2 helical membrane-spanning segments follow: residues 158-178 (HLLLLALLIILIGPFIYPGVL) and 180-200 (WVLTFIIALALLMSTLFCCLP).

As to quaternary structure, interacts with BNIP1. Polyubiquitinated. 'Lys-29'-linked autoubiquitination leads to proteasomal degradation.

It localises to the endoplasmic reticulum membrane. The enzyme catalyses S-ubiquitinyl-[E2 ubiquitin-conjugating enzyme]-L-cysteine + [acceptor protein]-L-lysine = [E2 ubiquitin-conjugating enzyme]-L-cysteine + N(6)-ubiquitinyl-[acceptor protein]-L-lysine.. It participates in protein modification; protein ubiquitination. Its function is as follows. E3 ubiquitin protein ligase that is part of an apoptotic signaling pathway activated by endoplasmic reticulum stress. Stimulates the expression of proteins specific of the unfolded protein response (UPR), ubiquitinates BNIP1 and regulates its localization to the mitochondrion and induces calcium release from the endoplasmic reticulum that ultimately leads to cell apoptosis. Plays a role in the maintenance of intestinal homeostasis and clearance of enteric pathogens. Upon NOD2 stimulation, ubiquitinates the ER stress sensor activating transcription factor 6/ATF6 and promotes the unfolded protein response UPR. Participates in basal level of autophagy maintenance by regulating the ubiquitination of EPHB2 and EPHB3. Upon stimulation by ligand EFNB1, ubiquitinates EPHB2 and further recruits MAP1LC3B for autophagy induction. Controls nutrient sensing by ubiquitinating Sestrin-2/SESN2, which is an intracellular sensor of cytosolic leucine and inhibitor of mTORC1 activity. The sequence is that of E3 ubiquitin-protein ligase RNF186 from Homo sapiens (Human).